Consider the following 184-residue polypeptide: ATP synthase subunit b, chloroplastic (184 aa).

A helical transmembrane segment spans residues 27–49 (LATNPINLSVVLGVLIFFGKGVL).

Belongs to the ATPase B chain family. F-type ATPases have 2 components, F(1) - the catalytic core - and F(0) - the membrane proton channel. F(1) has five subunits: alpha(3), beta(3), gamma(1), delta(1), epsilon(1). F(0) has four main subunits: a(1), b(1), b'(1) and c(10-14). The alpha and beta chains form an alternating ring which encloses part of the gamma chain. F(1) is attached to F(0) by a central stalk formed by the gamma and epsilon chains, while a peripheral stalk is formed by the delta, b and b' chains.

Its subcellular location is the plastid. It localises to the chloroplast thylakoid membrane. Functionally, f(1)F(0) ATP synthase produces ATP from ADP in the presence of a proton or sodium gradient. F-type ATPases consist of two structural domains, F(1) containing the extramembraneous catalytic core and F(0) containing the membrane proton channel, linked together by a central stalk and a peripheral stalk. During catalysis, ATP synthesis in the catalytic domain of F(1) is coupled via a rotary mechanism of the central stalk subunits to proton translocation. Its function is as follows. Component of the F(0) channel, it forms part of the peripheral stalk, linking F(1) to F(0). In Phalaenopsis aphrodite subsp. formosana (Moth orchid), this protein is ATP synthase subunit b, chloroplastic.